Reading from the N-terminus, the 63-residue chain is Large ribosomal subunit protein uL29 (63 aa).

This sequence belongs to the universal ribosomal protein uL29 family.

The polypeptide is Large ribosomal subunit protein uL29 (Vibrio cholerae serotype O1 (strain ATCC 39541 / Classical Ogawa 395 / O395)).